Here is a 312-residue protein sequence, read N- to C-terminus: Acetylglutamate kinase (312 aa).

Residues 77-78 (GG), arginine 99, and asparagine 192 each bind substrate.

This sequence belongs to the acetylglutamate kinase family. ArgB subfamily.

It is found in the cytoplasm. The enzyme catalyses N-acetyl-L-glutamate + ATP = N-acetyl-L-glutamyl 5-phosphate + ADP. The protein operates within amino-acid biosynthesis; L-arginine biosynthesis; N(2)-acetyl-L-ornithine from L-glutamate: step 2/4. In terms of biological role, catalyzes the ATP-dependent phosphorylation of N-acetyl-L-glutamate. In Synechococcus sp. (strain JA-2-3B'a(2-13)) (Cyanobacteria bacterium Yellowstone B-Prime), this protein is Acetylglutamate kinase.